Reading from the N-terminus, the 244-residue chain is Probable transcriptional regulatory protein XF_1906 (244 aa).

It belongs to the TACO1 family.

The protein localises to the cytoplasm. The chain is Probable transcriptional regulatory protein XF_1906 from Xylella fastidiosa (strain 9a5c).